The sequence spans 407 residues: Elongation factor Tu (407 aa).

Residues 10 to 217 (KPHVNVGTIG…ALDSYIPEPE (208 aa)) form the tr-type G domain. A G1 region spans residues 19-26 (GHVDHGKT). 19–26 (GHVDHGKT) is a GTP binding site. Thr26 lines the Mg(2+) pocket. Positions 60–64 (GITIA) are G2. The segment at 81–84 (DCPG) is G3. GTP contacts are provided by residues 81–85 (DCPGH) and 136–139 (NKAD). A G4 region spans residues 136-139 (NKAD). Residues 184–186 (SAL) form a G5 region.

It belongs to the TRAFAC class translation factor GTPase superfamily. Classic translation factor GTPase family. EF-Tu/EF-1A subfamily. Monomer.

It localises to the cytoplasm. It carries out the reaction GTP + H2O = GDP + phosphate + H(+). In terms of biological role, GTP hydrolase that promotes the GTP-dependent binding of aminoacyl-tRNA to the A-site of ribosomes during protein biosynthesis. The polypeptide is Elongation factor Tu (Saccharophagus degradans (strain 2-40 / ATCC 43961 / DSM 17024)).